Consider the following 328-residue polypeptide: Interleukin-12 subunit beta (328 aa).

A signal peptide spans 1 to 22 (MCHQQLVISWFSLVFLASPLMA). An Ig-like C2-type domain is found at 29–106 (DVYVVELDWY…LSHSLLLLHK (78 aa)). A disulfide bridge links Cys-50 with Cys-90. N-linked (GlcNAc...) asparagine glycans are attached at residues Asn-125, Asn-135, Asn-222, and Asn-303. The Fibronectin type-III domain occupies 237–328 (PPKNLQLKPL…WSEWASVPCS (92 aa)).

Belongs to the IL-12B family. As to quaternary structure, heterodimer with IL12A; disulfide-linked. The heterodimer is known as interleukin IL-12. Heterodimer with IL23A; disulfide-linked. The heterodimer is known as interleukin IL-23. Also secreted as a monomer. Interacts with NBR1; this interaction promotes IL-12 secretion.

The protein resides in the secreted. In terms of biological role, cytokine that can act as a growth factor for activated T and NK cells, enhance the lytic activity of NK/lymphokine-activated killer cells, and stimulate the production of IFN-gamma by resting PBMC. Its function is as follows. Associates with IL23A to form the IL-23 interleukin, a heterodimeric cytokine which functions in innate and adaptive immunity. IL-23 may constitute with IL-17 an acute response to infection in peripheral tissues. IL-23 binds to a heterodimeric receptor complex composed of IL12RB1 and IL23R, activates the Jak-Stat signaling cascade, stimulates memory rather than naive T-cells and promotes production of pro-inflammatory cytokines. IL-23 induces autoimmune inflammation and thus may be responsible for autoimmune inflammatory diseases and may be important for tumorigenesis. The polypeptide is Interleukin-12 subunit beta (IL12B) (Papio anubis (Olive baboon)).